The sequence spans 386 residues: Putative 8-amino-7-oxononanoate synthase 2 (386 aa).

Residue Arg21 participates in substrate binding. 104-105 (GY) contributes to the pyridoxal 5'-phosphate binding site. Residue His129 coordinates substrate. Pyridoxal 5'-phosphate-binding positions include Ser176, 201–204 (DDAH), and 230–233 (TLSK). Lys233 carries the N6-(pyridoxal phosphate)lysine modification.

This sequence belongs to the class-II pyridoxal-phosphate-dependent aminotransferase family. BioF subfamily. Homodimer. It depends on pyridoxal 5'-phosphate as a cofactor.

The enzyme catalyses 6-carboxyhexanoyl-[ACP] + L-alanine + H(+) = (8S)-8-amino-7-oxononanoate + holo-[ACP] + CO2. It participates in cofactor biosynthesis; biotin biosynthesis. Functionally, catalyzes the decarboxylative condensation of pimeloyl-[acyl-carrier protein] and L-alanine to produce 8-amino-7-oxononanoate (AON), [acyl-carrier protein], and carbon dioxide. The protein is Putative 8-amino-7-oxononanoate synthase 2 (bioF) of Bacillus velezensis (strain DSM 23117 / BGSC 10A6 / LMG 26770 / FZB42) (Bacillus amyloliquefaciens subsp. plantarum).